The primary structure comprises 653 residues: Transcription factor Ken 1 (653 aa).

Residues 35–103 form the BTB domain; the sequence is TDLLLICDGK…LYSGQVYVRS (69 aa). 4 disordered regions span residues 126-215, 234-305, 429-451, and 512-534; these read NSDG…DRDR, NNHP…SDDA, LSNN…PPSA, and ELSA…GSGS. Polar residues predominate over residues 145-157; the sequence is NRNTEGITGSSVV. The segment covering 251–272 has biased composition (basic residues); the sequence is GHHHHHHHHHHHRQLHQIKTRS. Residues 286-299 are compositionally biased toward polar residues; that stretch reads SDPVNLSIVKQQQD. Residues 430–444 are compositionally biased toward low complexity; the sequence is SNNNNSSSNNNNNNN. Residues 520 to 534 are compositionally biased toward gly residues; it reads AGGGGGGSGGNGSGS. C2H2-type zinc fingers lie at residues 555–577, 583–606, and 619–641; these read YRCE…LRVH, FACR…CSVH, and YTCC…LSGH.

The protein localises to the nucleus. Its function is as follows. Transcription factor required for terminalia development. Negative regulator of the JAK/STAT pathway: represses JAK/STAT-dependent expression of ventral veins lacking (vvl) in the posterior spiracles. This chain is Transcription factor Ken 1, found in Culex quinquefasciatus (Southern house mosquito).